The sequence spans 500 residues: Protein ASPARTIC PROTEASE IN GUARD CELL 1 (500 aa).

The N-terminal stretch at 1-24 (MAFPRFLSLLAVVTLSLFLTTTDA) is a signal peptide. The Peptidase A1 domain occupies 162–496 (YFSRIGVGTP…DLSKNVIGLS (335 aa)). Residue Asp-180 is part of the active site. 6 disulfides stabilise this stretch: Cys-190–Cys-193, Cys-196–Cys-271, Cys-217–Cys-235, Cys-222–Cys-230, Cys-307–Cys-500, and Cys-419–Cys-461. The active site involves Asp-379.

This sequence belongs to the peptidase A1 family. In terms of tissue distribution, expressed in young seedlings, leaves, guard-cells, stems, flowers and siliques, but not in roots or mesophyll cells.

Its subcellular location is the endoplasmic reticulum. With respect to regulation, inhibited by pepstatin A. Its function is as follows. Aspartic protease involved in drought avoidance through abscisic acid signaling. In Arabidopsis thaliana (Mouse-ear cress), this protein is Protein ASPARTIC PROTEASE IN GUARD CELL 1 (ASPG1).